We begin with the raw amino-acid sequence, 139 residues long: Acidic phospholipase A2 4 (139 aa).

Positions 1–16 (MRTLWIVAVWLVGVEG) are cleaved as a signal peptide. Cystine bridges form between C42–C131, C44–C60, C59–C111, C65–C139, C66–C104, C73–C97, and C91–C102. Ca(2+) is bound by residues Y43, G45, and G47. The active site involves H63. Ca(2+) is bound at residue D64. D105 is a catalytic residue.

The protein belongs to the phospholipase A2 family. Group II subfamily. D49 sub-subfamily. The cofactor is Ca(2+). As to expression, expressed by the venom gland.

The protein resides in the secreted. The enzyme catalyses a 1,2-diacyl-sn-glycero-3-phosphocholine + H2O = a 1-acyl-sn-glycero-3-phosphocholine + a fatty acid + H(+). PLA2 catalyzes the calcium-dependent hydrolysis of the 2-acyl groups in 3-sn-phosphoglycerides. The polypeptide is Acidic phospholipase A2 4 (Echis carinatus sochureki (Saw-scaled viper)).